A 299-amino-acid polypeptide reads, in one-letter code: 11-beta-hydroxysteroid dehydrogenase-like 4A (299 aa).

The chain crosses the membrane as a helical; Signal-anchor for type II membrane protein span at residues 10 to 30; sequence ILLPIVTVSFLLVFMPFSIFF. NADP(+)-binding positions include 54-80 and D105; that span reads GSSS…VARR. S184 provides a ligand contact to substrate. Catalysis depends on Y197, which acts as the Proton acceptor. NADP(+) contacts are provided by residues 197 to 201 and K201; that span reads YAASK.

The protein belongs to the short-chain dehydrogenases/reductases (SDR) family.

It is found in the membrane. The sequence is that of 11-beta-hydroxysteroid dehydrogenase-like 4A (HSD4) from Arabidopsis thaliana (Mouse-ear cress).